Reading from the N-terminus, the 158-residue chain is Putative pre-16S rRNA nuclease (158 aa).

This sequence belongs to the YqgF nuclease family.

It localises to the cytoplasm. In terms of biological role, could be a nuclease involved in processing of the 5'-end of pre-16S rRNA. This chain is Putative pre-16S rRNA nuclease, found in Hahella chejuensis (strain KCTC 2396).